Here is a 440-residue protein sequence, read N- to C-terminus: MLRLQSLGSLPAHAEPAWTVSFNPTRSLLASCSTDRTIRLYSYIIPSSSDGLPSQDDSQAVFSLAKVIETDHKRTVRSIAWSPDGRTLASGSFDSTVGVWEEVIPLSDDEEEEDEGAQGVYKPAGVDSDGDGDGGKEKEWECVTTLEGHESECKSVGFSSDGALLASCSRDKSVWVWEVQPDADFECIAVMMEHSQDVKSIAWHPHEEILASASYDSYIHLAYDDPDSDWCIFQKLHPSLPSTPLTIPSTSPSHLIDALVPTEEEKKAEAELQVPPLEEDETVWCLAWSPDGRWLASGGDNGGIRLWQRTGSQPDSAFKEILHTAAHSRSVFSLSWSPPYPSAESAGSTDSTDLGMLASAGEDGKIIIWQITVPPSPSSASQEIDNEQISIRPIAAQKDAHGVNDINSVAWCVREDKKGWGMLSSAGDDGSVKVWRVVRD.

WD repeat units lie at residues 12 to 51 (AHAE…SSDG), 71 to 110 (DHKR…SDDE), 148 to 187 (GHES…DFEC), 193 to 233 (EHSQ…WCIF), 278 to 317 (EEDE…PDSA), 326 to 379 (AHSR…SPSS), and 401 to 440 (HGVN…VVRD). Residues 107 to 116 (SDDEEEEDEG) are compositionally biased toward acidic residues. A disordered region spans residues 107–137 (SDDEEEEDEGAQGVYKPAGVDSDGDGDGGKE).

Belongs to the WD repeat CIA1 family.

In terms of biological role, essential component of the cytosolic iron-sulfur (Fe/S) protein assembly machinery. Required for the maturation of extramitochondrial Fe/S proteins. The chain is Probable cytosolic iron-sulfur protein assembly protein 1 from Cryptococcus neoformans var. neoformans serotype D (strain B-3501A) (Filobasidiella neoformans).